The primary structure comprises 1059 residues: Endo-1,4-beta-xylanase A (1059 aa).

An N-terminal signal peptide occupies residues 1-30 (MQVRKRRGLLDVSTAVLVGILAGFLGVVLA). The A-1 stretch occupies residues 47-199 (SSLETVLALS…LDKVQVLAPK (153 aa)). The tract at residues 200–354 (ESGPKVIYET…DDVKIVDTTS (155 aa)) is A-2. In terms of domain architecture, GH10 spans 364-692 (EKEIPALKEV…KLAYWAIVAP (329 aa)). The active-site Proton donor is E502. The active-site Nucleophile is E608. CBM-cenC domains lie at 700–870 (KESR…LEGI) and 871–1059 (MVAT…RLIK).

Belongs to the glycosyl hydrolase 10 (cellulase F) family.

It catalyses the reaction Endohydrolysis of (1-&gt;4)-beta-D-xylosidic linkages in xylans.. This Thermotoga maritima (strain ATCC 43589 / DSM 3109 / JCM 10099 / NBRC 100826 / MSB8) protein is Endo-1,4-beta-xylanase A (xynA).